The sequence spans 315 residues: MTEQLPLALFLMGPTASGKTELAIRLRQRYPVELISVDSALIYKGMDIGTAKPDEREQQLAPHRLIDILDPTEAYSAADFRRDALAAMNEIVVQGKIPLLVGGTMLYFKALLEGLSPLPAANAEIRQQIEQEALTKGWSVLHDELQEIDPVSAARIHPNDPQRLSRALEVYRISGKTLTELTETKGESLPFRVKQFAIAPKERAELHRRIELRFDKMMEAGFEQEMRALYTRKDLHPDLPSIRCVGYRQMWDYLDGNCTLDEAIYRGICATRQLAKRQITWLRSWDNLTWLDSENIEQSLETLSEAIASDRDSCV.

Residue 13–20 (GPTASGKT) coordinates ATP. 15 to 20 (TASGKT) contributes to the substrate binding site. Interaction with substrate tRNA stretches follow at residues 38 to 41 (DSAL), 162 to 166 (QRLSR), 243 to 248 (RCVGYR), and 276 to 283 (KRQITWLR).

This sequence belongs to the IPP transferase family. Monomer. Mg(2+) is required as a cofactor.

The enzyme catalyses adenosine(37) in tRNA + dimethylallyl diphosphate = N(6)-dimethylallyladenosine(37) in tRNA + diphosphate. Its function is as follows. Catalyzes the transfer of a dimethylallyl group onto the adenine at position 37 in tRNAs that read codons beginning with uridine, leading to the formation of N6-(dimethylallyl)adenosine (i(6)A). The polypeptide is tRNA dimethylallyltransferase (Vibrio vulnificus (strain YJ016)).